Reading from the N-terminus, the 495-residue chain is Divinyl ether synthase CYP74M3 (495 aa).

Residue cysteine 446 coordinates heme.

This sequence belongs to the cytochrome P450 family. Requires heme as cofactor.

It catalyses the reaction (13S)-hydroperoxy-(9Z,11E)-octadecadienoate = etheroleate + H2O. The catalysed reaction is (13S)-hydroperoxy-(9Z,11E,15Z)-octadecatrienoate = etherolenate + H2O. It participates in lipid metabolism; oxylipin biosynthesis. In terms of biological role, divinyl ether synthase involved in oxylipin biosynthesis. Catalyzes the conversion of (13S)-hydroperoxy-(9Z,11E)-octadecadienoate (13-HPOD) to etheroleate and (13S)-hydroperoxy-(9Z,11E,15Z)-octadecatrienoate (13-HPOT) to etherolenate. Has no activity with the corresponding 9-hydroperoxides (9-HPOD and 9-HPOT). This is Divinyl ether synthase CYP74M3 from Selaginella moellendorffii (Spikemoss).